A 192-amino-acid chain; its full sequence is Fe/S biogenesis protein NfuA (192 aa).

Positions 149 and 152 each coordinate [4Fe-4S] cluster.

The protein belongs to the NfuA family. As to quaternary structure, homodimer. It depends on [4Fe-4S] cluster as a cofactor.

Involved in iron-sulfur cluster biogenesis. Binds a 4Fe-4S cluster, can transfer this cluster to apoproteins, and thereby intervenes in the maturation of Fe/S proteins. Could also act as a scaffold/chaperone for damaged Fe/S proteins. The sequence is that of Fe/S biogenesis protein NfuA from Shewanella loihica (strain ATCC BAA-1088 / PV-4).